A 208-amino-acid polypeptide reads, in one-letter code: Probable GTP-binding protein EngB (208 aa).

One can recognise an EngB-type G domain in the interval 18–187 (KQFEICVIGR…FALMKKVVIQ (170 aa)). Residues 26–33 (GRSNVGKS), 52–56 (GRTQL), 69–72 (DLPG), 135–138 (NKLD), and 166–168 (VSA) contribute to the GTP site. Mg(2+) contacts are provided by S33 and T54.

The protein belongs to the TRAFAC class TrmE-Era-EngA-EngB-Septin-like GTPase superfamily. EngB GTPase family. Mg(2+) is required as a cofactor.

Functionally, necessary for normal cell division and for the maintenance of normal septation. This is Probable GTP-binding protein EngB from Ureaplasma parvum serovar 3 (strain ATCC 27815 / 27 / NCTC 11736).